Reading from the N-terminus, the 476-residue chain is Ribulose bisphosphate carboxylase large chain (476 aa).

The propeptide occupies 1–2 (MS). An N-acetylproline modification is found at Pro3. Lys14 is subject to N6,N6,N6-trimethyllysine. Substrate-binding residues include Asn123 and Thr173. Lys175 acts as the Proton acceptor in catalysis. Lys177 lines the substrate pocket. The Mg(2+) site is built by Lys201, Asp203, and Glu204. Lys201 carries the N6-carboxylysine modification. The active-site Proton acceptor is His294. 3 residues coordinate substrate: Arg295, His327, and Ser379.

This sequence belongs to the RuBisCO large chain family. Type I subfamily. As to quaternary structure, heterohexadecamer of 8 large chains and 8 small chains; disulfide-linked. The disulfide link is formed within the large subunit homodimers. Mg(2+) is required as a cofactor. Post-translationally, the disulfide bond which can form in the large chain dimeric partners within the hexadecamer appears to be associated with oxidative stress and protein turnover.

Its subcellular location is the plastid. It is found in the chloroplast. The enzyme catalyses 2 (2R)-3-phosphoglycerate + 2 H(+) = D-ribulose 1,5-bisphosphate + CO2 + H2O. It carries out the reaction D-ribulose 1,5-bisphosphate + O2 = 2-phosphoglycolate + (2R)-3-phosphoglycerate + 2 H(+). Its function is as follows. RuBisCO catalyzes two reactions: the carboxylation of D-ribulose 1,5-bisphosphate, the primary event in carbon dioxide fixation, as well as the oxidative fragmentation of the pentose substrate in the photorespiration process. Both reactions occur simultaneously and in competition at the same active site. In Zea mays (Maize), this protein is Ribulose bisphosphate carboxylase large chain.